Here is a 166-residue protein sequence, read N- to C-terminus: Large ribosomal subunit protein uL10 (166 aa).

It belongs to the universal ribosomal protein uL10 family. Part of the ribosomal stalk of the 50S ribosomal subunit. The N-terminus interacts with L11 and the large rRNA to form the base of the stalk. The C-terminus forms an elongated spine to which L12 dimers bind in a sequential fashion forming a multimeric L10(L12)X complex.

Functionally, forms part of the ribosomal stalk, playing a central role in the interaction of the ribosome with GTP-bound translation factors. The sequence is that of Large ribosomal subunit protein uL10 from Tropheryma whipplei (strain TW08/27) (Whipple's bacillus).